The chain runs to 400 residues: 2-[(L-alanin-3-ylcarbamoyl)methyl]-2-hydroxybutanedioate decarboxylase (400 aa).

K50 carries the post-translational modification N6-(pyridoxal phosphate)lysine. Pyridoxal 5'-phosphate-binding positions include G228 and 266–269; that span reads ECGR. C344 acts as the Proton donor in catalysis. Y373 is a binding site for pyridoxal 5'-phosphate.

Belongs to the Orn/Lys/Arg decarboxylase class-II family. Homodimer. Pyridoxal 5'-phosphate serves as cofactor.

It carries out the reaction 2-[(L-alanin-3-ylcarbamoyl)methyl]-2-hydroxybutanedioate + H(+) = 2-[(2-aminoethylcarbamoyl)methyl]-2-hydroxybutanedioate + CO2. The protein operates within siderophore biosynthesis. Functionally, catalyzes the decarboxylation of citryl-L-2,3-diaminopropionic acid to citryl-diaminoethane, the second step in staphyloferrin B biosynthesis. The chain is 2-[(L-alanin-3-ylcarbamoyl)methyl]-2-hydroxybutanedioate decarboxylase from Staphylococcus aureus (strain NCTC 8325 / PS 47).